The following is a 164-amino-acid chain: Endoribonuclease YbeY (164 aa).

Positions 130, 134, and 140 each coordinate Zn(2+).

It belongs to the endoribonuclease YbeY family. It depends on Zn(2+) as a cofactor.

It is found in the cytoplasm. Its function is as follows. Single strand-specific metallo-endoribonuclease involved in late-stage 70S ribosome quality control and in maturation of the 3' terminus of the 16S rRNA. The protein is Endoribonuclease YbeY of Streptococcus mutans serotype c (strain ATCC 700610 / UA159).